The chain runs to 1021 residues: Replication factor C subunit 1 (1021 aa).

Disordered regions lie at residues 1–259 (MSSD…EGAP) and 339–392 (PAKA…GSAS). Over residues 90 to 110 (KVSDELEDDMKPLPAKEVHKE) the composition is skewed to basic and acidic residues. Positions 123-138 (SKRKTPVKPPPSKKLK) are enriched in basic residues. The span at 197–207 (LDDDGEEDKMD) shows a compositional bias: acidic residues. The segment covering 219-236 (RGRGGASGGRGRGGGGRG) has biased composition (gly residues). 2 stretches are compositionally biased toward basic and acidic residues: residues 241 to 255 (GERK…KEVP) and 347 to 357 (HQSDKNSEKQQ). Residues 257–347 (GAPDCLTGLT…KPAKATVAKH (91 aa)) form the BRCT domain. Residues 374-392 (NQITTGKNISPKSNKGSAS) show a composition bias toward polar residues. 465-472 (SGPPGIGK) contributes to the ATP binding site. Residues 931–1021 (VGESLPEENG…AGGSGGKRKR (91 aa)) form a disordered region. Acidic residues predominate over residues 945 to 958 (EGDEEDSSDAENND). Over residues 965–977 (TKPKLDLQSDKKK) the composition is skewed to basic and acidic residues. The span at 999–1010 (AGRSKASGSAGK) shows a compositional bias: low complexity. Gly residues predominate over residues 1011 to 1021 (AAGGSGGKRKR).

This sequence belongs to the activator 1 large subunit family. Heterotetramer of subunits RFC2, RFC3, RFC4 and RFC5 that can form a complex with RFC1. As to expression, expressed in roots, leaves, shoot apical meristem (SAM), flag leaves and panicles.

The protein resides in the nucleus. Its function is as follows. May be involved in DNA replication and thus regulate cell proliferation. The chain is Replication factor C subunit 1 (RFC1) from Oryza sativa subsp. japonica (Rice).